The primary structure comprises 363 residues: Lipoyl synthase (363 aa).

[4Fe-4S] cluster-binding residues include cysteine 55, cysteine 60, cysteine 66, cysteine 81, cysteine 85, cysteine 88, and serine 292. Residues 67–281 (WESREATFLI…SKLAKELGFG (215 aa)) form the Radical SAM core domain. Positions 338–363 (PSEETPVTTRMAKTPAQSNSVAATIR) are disordered. Positions 352 to 363 (PAQSNSVAATIR) are enriched in polar residues.

It belongs to the radical SAM superfamily. Lipoyl synthase family. The cofactor is [4Fe-4S] cluster.

The protein localises to the cytoplasm. It carries out the reaction [[Fe-S] cluster scaffold protein carrying a second [4Fe-4S](2+) cluster] + N(6)-octanoyl-L-lysyl-[protein] + 2 oxidized [2Fe-2S]-[ferredoxin] + 2 S-adenosyl-L-methionine + 4 H(+) = [[Fe-S] cluster scaffold protein] + N(6)-[(R)-dihydrolipoyl]-L-lysyl-[protein] + 4 Fe(3+) + 2 hydrogen sulfide + 2 5'-deoxyadenosine + 2 L-methionine + 2 reduced [2Fe-2S]-[ferredoxin]. The protein operates within protein modification; protein lipoylation via endogenous pathway; protein N(6)-(lipoyl)lysine from octanoyl-[acyl-carrier-protein]: step 2/2. Its function is as follows. Catalyzes the radical-mediated insertion of two sulfur atoms into the C-6 and C-8 positions of the octanoyl moiety bound to the lipoyl domains of lipoate-dependent enzymes, thereby converting the octanoylated domains into lipoylated derivatives. The protein is Lipoyl synthase of Corynebacterium aurimucosum (strain ATCC 700975 / DSM 44827 / CIP 107346 / CN-1) (Corynebacterium nigricans).